Reading from the N-terminus, the 325-residue chain is Sel1-repeat-containing protein YbeQ (325 aa).

8 Sel1-like repeats span residues 26-61 (EAQY…EQGH), 63-97 (EAQY…LQGH), 103-130 (ALGW…AESG), 132-167 (SYAQ…LQGH), 168-203 (SDAQ…QQGN), 205-239 (HAQF…AQGS), 242-275 (AYVN…ECND), and 280-305 (YNLA…LYRK).

It to E.coli YbeT.

The polypeptide is Sel1-repeat-containing protein YbeQ (ybeQ) (Escherichia coli (strain K12)).